The sequence spans 189 residues: GMP synthase [glutamine-hydrolyzing] subunit A (189 aa).

The region spanning 1–189 is the Glutamine amidotransferase type-1 domain; that stretch reads MIVILNNGGQ…CKKCGFEFEE (189 aa). The active-site Nucleophile is the Cys-76. Residues His-163 and Glu-165 contribute to the active site.

Heterodimer composed of a glutamine amidotransferase subunit (A) and a GMP-binding subunit (B).

It carries out the reaction XMP + L-glutamine + ATP + H2O = GMP + L-glutamate + AMP + diphosphate + 2 H(+). Its pathway is purine metabolism; GMP biosynthesis; GMP from XMP (L-Gln route): step 1/1. Its function is as follows. Catalyzes the synthesis of GMP from XMP. The chain is GMP synthase [glutamine-hydrolyzing] subunit A from Methanococcus maripaludis (strain C6 / ATCC BAA-1332).